A 374-amino-acid chain; its full sequence is Putative heme chaperone HemW-like protein (374 aa).

Residues 1 to 231 form the Radical SAM core domain; that stretch reads MKLLGLYINI…EKLLKKSGYK (231 aa).

The protein belongs to the anaerobic coproporphyrinogen-III oxidase family. HemW subfamily.

It is found in the cytoplasm. In terms of biological role, might be a heme chaperone; in E.coli heme binds independently of binding to [4Fe-4S] or S-adenosyl-L-methionine. The polypeptide is Putative heme chaperone HemW-like protein (Buchnera aphidicola subsp. Baizongia pistaciae (strain Bp)).